A 201-amino-acid chain; its full sequence is Histidinol dehydrogenase (201 aa).

The protein belongs to the histidinol dehydrogenase family. Homodimer. It depends on Zn(2+) as a cofactor.

It catalyses the reaction L-histidinol + 2 NAD(+) + H2O = L-histidine + 2 NADH + 3 H(+). It participates in amino-acid biosynthesis; L-histidine biosynthesis; L-histidine from 5-phospho-alpha-D-ribose 1-diphosphate: step 9/9. Functionally, catalyzes the sequential NAD-dependent oxidations of L-histidinol to L-histidinaldehyde and then to L-histidine. The sequence is that of Histidinol dehydrogenase (hisD) from Buchnera aphidicola subsp. Melaphis rhois.